Here is a 488-residue protein sequence, read N- to C-terminus: Probable Xaa-Pro aminopeptidase ATEG_00858 (488 aa).

4 residues coordinate Mn(2+): D273, D284, E417, and E456.

It belongs to the peptidase M24B family. Requires Mn(2+) as cofactor.

It catalyses the reaction Release of any N-terminal amino acid, including proline, that is linked to proline, even from a dipeptide or tripeptide.. Its function is as follows. Catalyzes the removal of a penultimate prolyl residue from the N-termini of peptides. The polypeptide is Probable Xaa-Pro aminopeptidase ATEG_00858 (Aspergillus terreus (strain NIH 2624 / FGSC A1156)).